Reading from the N-terminus, the 157-residue chain is Probable chemoreceptor glutamine deamidase CheD (157 aa).

This sequence belongs to the CheD family.

The enzyme catalyses L-glutaminyl-[protein] + H2O = L-glutamyl-[protein] + NH4(+). Functionally, probably deamidates glutamine residues to glutamate on methyl-accepting chemotaxis receptors (MCPs), playing an important role in chemotaxis. The sequence is that of Probable chemoreceptor glutamine deamidase CheD from Archaeoglobus fulgidus (strain ATCC 49558 / DSM 4304 / JCM 9628 / NBRC 100126 / VC-16).